Here is a 518-residue protein sequence, read N- to C-terminus: MVRSGKNGDLHLKQIAYYKRTGEYHPTTLSSERSGIRRAAKKFVFKEKKLFYVGKDRKQNRLVVVSEEEKKKVLRECHENGPGVHHGISRTLTLVESSYYWTSVTNDVKQWVYACQHCQVAKSTVIVAPQQHLSVVGNPWSVVTVDLMGPFHTSSRSHVYAMIMTDLFTKWVMILPLCDVSASEISKAIINIFFLYGPPQKIIMDQRDEFIDQINVELYRLFGAKEIVISQASGSVNPSESTPSTVKTFLSKHCAEHPETWDEELPALSFAFNVTRVEPTKNSPYFQMFNRNPCLLECPHEGGGEGTSVFARIVAAVREADGVVENQTPAAGQMESSTSEELSKSKVAKKKPKQLNPFHLKVGHEVLRQRKNWWKDGRFQSEWVGPCVIDYITDSGCAVLRDNTGTRLKRPIKMSHLRPYVREPSEQDSLYLLQGSIVADHDYIGLPEIPVGTYQANILVEDATIGIVDNELLISSKDHELLEYRNSKISALVEDHSSLEKQTFSLLDSSNQVLEYLS.

An Integrase catalytic domain is found at 135–293 (VVGNPWSVVT…PYFQMFNRNP (159 aa)). The interval 326-348 (NQTPAAGQMESSTSEELSKSKVA) is disordered. S498 carries the phosphoserine modification.

The polypeptide is Gypsy retrotransposon integrase-like protein 1 (GIN1) (Rattus norvegicus (Rat)).